Reading from the N-terminus, the 428-residue chain is Ribulose bisphosphate carboxylase (428 aa).

Lysine 151 serves as the catalytic Proton acceptor. Position 153 (lysine 153) interacts with substrate. Positions 177, 179, and 180 each coordinate Mg(2+). Lysine 177 carries the N6-carboxylysine modification. Histidine 270 (proton acceptor) is an active-site residue. Substrate is bound by residues arginine 271, histidine 303, 354–356 (SGG), and 376–379 (QFGG).

The protein belongs to the RuBisCO large chain family. Type III subfamily. In terms of assembly, homodimer or homodecamer. In contrast to form I RuBisCO, the form III RuBisCO is composed solely of large subunits. Mg(2+) serves as cofactor.

The enzyme catalyses 2 (2R)-3-phosphoglycerate + 2 H(+) = D-ribulose 1,5-bisphosphate + CO2 + H2O. It catalyses the reaction D-ribulose 1,5-bisphosphate + O2 = 2-phosphoglycolate + (2R)-3-phosphoglycerate + 2 H(+). Functionally, catalyzes the addition of molecular CO(2) and H(2)O to ribulose 1,5-bisphosphate (RuBP), generating two molecules of 3-phosphoglycerate (3-PGA). Functions in an archaeal AMP degradation pathway, together with AMP phosphorylase and R15P isomerase. The polypeptide is Ribulose bisphosphate carboxylase (Methanosarcina barkeri (strain Fusaro / DSM 804)).